Consider the following 105-residue polypeptide: MPKIRIKLRGFDHKTLDASAQKIVEAARRSGAQVSGPIPLPTRVRRFTVIRGPFKHKDSREHFELRTHNRLVDIINPNRKTIEQLMTLDLPTGVEIEIKTVGGGR.

The protein belongs to the universal ribosomal protein uS10 family. As to quaternary structure, part of the 30S ribosomal subunit.

In terms of biological role, involved in the binding of tRNA to the ribosomes. This chain is Small ribosomal subunit protein uS10, found in Thermus thermophilus (strain ATCC BAA-163 / DSM 7039 / HB27).